Reading from the N-terminus, the 172-residue chain is Acetolactate synthase small subunit (172 aa).

The region spanning 4-78 (TLSVLVEDEA…NILKVDNITE (75 aa)) is the ACT domain.

Belongs to the acetolactate synthase small subunit family. Dimer of large and small chains.

The protein localises to the plastid. It localises to the chloroplast. The enzyme catalyses 2 pyruvate + H(+) = (2S)-2-acetolactate + CO2. It participates in amino-acid biosynthesis; L-isoleucine biosynthesis; L-isoleucine from 2-oxobutanoate: step 1/4. The protein operates within amino-acid biosynthesis; L-valine biosynthesis; L-valine from pyruvate: step 1/4. In Cyanidium caldarium (Red alga), this protein is Acetolactate synthase small subunit (ilvH).